The sequence spans 576 residues: S-layer protein (576 aa).

A signal peptide spans 1 to 23 (KKIGAIAAGSAMVASALATGVFA). N-linked (GlcNAc...) asparagine glycosylation is found at N102 and N132.

It belongs to the Mj S-layer protein family. In terms of processing, N-linked glycans consist of the 779 Da trisaccharide beta-ManNAc(Thr)-(1-4)-beta-GlcNAc3NAcA-(1-3)-beta-GlcNAc.

The protein resides in the secreted. It is found in the cell wall. The protein localises to the S-layer. In terms of biological role, S-layer protein. The S-layer is a paracrystalline mono-layered assembly of proteins which coat the surface of the cell. The protein is S-layer protein (sla) of Methanococcus voltae.